We begin with the raw amino-acid sequence, 184 residues long: Acireductone dioxygenase (184 aa).

Fe(2+) is bound by residues His-87, His-89, Glu-93, and His-137. The Ni(2+) site is built by His-87, His-89, Glu-93, and His-137.

The protein belongs to the acireductone dioxygenase (ARD) family. The cofactor is Fe(2+). Requires Ni(2+) as cofactor.

It localises to the cytoplasm. The protein resides in the nucleus. The catalysed reaction is 1,2-dihydroxy-5-(methylsulfanyl)pent-1-en-3-one + O2 = 4-methylsulfanyl-2-oxobutanoate + formate + 2 H(+). It carries out the reaction 1,2-dihydroxy-5-(methylsulfanyl)pent-1-en-3-one + O2 = 3-(methylsulfanyl)propanoate + CO + formate + 2 H(+). The protein operates within amino-acid biosynthesis; L-methionine biosynthesis via salvage pathway; L-methionine from S-methyl-5-thio-alpha-D-ribose 1-phosphate: step 5/6. Its function is as follows. Catalyzes 2 different reactions between oxygen and the acireductone 1,2-dihydroxy-3-keto-5-methylthiopentene (DHK-MTPene) depending upon the metal bound in the active site. Fe-containing acireductone dioxygenase (Fe-ARD) produces formate and 2-keto-4-methylthiobutyrate (KMTB), the alpha-ketoacid precursor of methionine in the methionine recycle pathway. Ni-containing acireductone dioxygenase (Ni-ARD) produces methylthiopropionate, carbon monoxide and formate, and does not lie on the methionine recycle pathway. In Ciona intestinalis (Transparent sea squirt), this protein is Acireductone dioxygenase.